The primary structure comprises 513 residues: Ribonuclease Y (513 aa).

Residues 4-24 (TTSLIIAILAGILGIVIGFFF) traverse the membrane as a helical segment. The disordered stretch occupies residues 78 to 106 (KSRLKEISRQEDRLNSKEENLERKNASLE). One can recognise a KH domain in the interval 203 to 288 (TVSVVNLPND…EMVEKARKDV (86 aa)). Residues 329 to 422 (VLKHSIEVSN…VQSADAISAA (94 aa)) enclose the HD domain.

It belongs to the RNase Y family.

It localises to the cell membrane. Functionally, endoribonuclease that initiates mRNA decay. The polypeptide is Ribonuclease Y (Finegoldia magna (strain ATCC 29328 / DSM 20472 / WAL 2508) (Peptostreptococcus magnus)).